The following is a 79-amino-acid chain: Translational regulator CsrA (79 aa).

This sequence belongs to the CsrA/RsmA family. In terms of assembly, homodimer; the beta-strands of each monomer intercalate to form a hydrophobic core, while the alpha-helices form wings that extend away from the core.

The protein localises to the cytoplasm. In terms of biological role, a translational regulator that binds mRNA to regulate translation initiation and/or mRNA stability. Usually binds in the 5'-UTR at or near the Shine-Dalgarno sequence preventing ribosome-binding, thus repressing translation. Its main target seems to be the major flagellin gene, while its function is anatagonized by FliW. This chain is Translational regulator CsrA, found in Helicobacter hepaticus (strain ATCC 51449 / 3B1).